We begin with the raw amino-acid sequence, 1342 residues long: DNA-directed RNA polymerase subunit beta (1342 aa).

It belongs to the RNA polymerase beta chain family. As to quaternary structure, the RNAP catalytic core consists of 2 alpha, 1 beta, 1 beta' and 1 omega subunit. When a sigma factor is associated with the core the holoenzyme is formed, which can initiate transcription.

The catalysed reaction is RNA(n) + a ribonucleoside 5'-triphosphate = RNA(n+1) + diphosphate. DNA-dependent RNA polymerase catalyzes the transcription of DNA into RNA using the four ribonucleoside triphosphates as substrates. In Glaesserella parasuis serovar 5 (strain SH0165) (Haemophilus parasuis), this protein is DNA-directed RNA polymerase subunit beta.